We begin with the raw amino-acid sequence, 420 residues long: Heterogeneous nuclear ribonucleoprotein D-like (420 aa).

Disordered stretches follow at residues 1-83 (MEVP…RRRP) and 96-120 (QRSA…SVTM). Arg25 bears the Omega-N-methylarginine mark. The span at 36–52 (RQLAPLLPSLAPSSARQ) shows a compositional bias: low complexity. RRM domains follow at residues 148-230 (GKMF…KGKE) and 233-312 (KKVF…QPKE). Lys161 carries the post-translational modification N6-methyllysine. Lys209 participates in a covalent cross-link: Glycyl lysine isopeptide (Lys-Gly) (interchain with G-Cter in SUMO2). Lys216 bears the N6-acetyllysine mark. Position 241 is a phosphoserine (Ser241). Disordered regions lie at residues 313-348 (VYRQ…NWNQ) and 398-420 (GQQS…YQPY). Residues 323–342 (GGRGAAAGGRGGTRGRGRGQ) show a composition bias toward gly residues. The interval 342 to 420 (QGQNWNQGFN…GNHQNNYQPY (79 aa)) is necessary for interaction with TNPO1. The segment at 396–420 (YSGQQSTYGKASRGGGNHQNNYQPY) is necessary for its nuclear import and export. Residue Arg408 is modified to Dimethylated arginine; alternate. At Arg408 the chain carries Omega-N-methylarginine; alternate.

In terms of assembly, interacts with ZNF148. Interacts with TNPO1. Dimethylation of Arg-408 is probably of the asymmetric type. In terms of tissue distribution, expressed in heart, brain, placenta, lung, liver, skeletal muscle, kidney, pancreas, spleen, thymus, prostate, testis, ovary, small intestine, colon and leukocytes. Expressed in myeloid leukemia, gastric adenocarcinoma, cervical carcinoma, hepatoma, fibrosarcoma, colon adenocarcinoma, epidermoid carcinoma, osteosarcoma and urinary bladder carcinoma cells.

It is found in the nucleus. The protein localises to the cytoplasm. Acts as a transcriptional regulator. Promotes transcription repression. Promotes transcription activation in differentiated myotubes. Binds to double- and single-stranded DNA sequences. Binds to the transcription suppressor CATR sequence of the COX5B promoter. Binds with high affinity to RNA molecules that contain AU-rich elements (AREs) found within the 3'-UTR of many proto-oncogenes and cytokine mRNAs. Binds both to nuclear and cytoplasmic poly(A) mRNAs. Binds to poly(G) and poly(A), but not to poly(U) or poly(C) RNA homopolymers. Binds to the 5'-ACUAGC-3' RNA consensus sequence. The protein is Heterogeneous nuclear ribonucleoprotein D-like (HNRNPDL) of Homo sapiens (Human).